The chain runs to 141 residues: Methane monooxygenase regulatory protein B (141 aa).

Belongs to the TmoD/XamoD family. In terms of assembly, the soluble methane monooxygenase (sMMO) consists of four components A/MMOH (composed of alpha/MmoX, beta/MmoY and gamma/MmoZ), B/MMOB (MmoB), C/MMOR (MmoC) and D/MMOD (MmoD).

Its function is as follows. The B protein acts as a regulator of electron flow through the soluble mmo complex, switching the enzyme from an oxidase to a hydroxylase in the presence of the substrate. In Methylococcus capsulatus (strain ATCC 33009 / NCIMB 11132 / Bath), this protein is Methane monooxygenase regulatory protein B (mmoB).